A 483-amino-acid polypeptide reads, in one-letter code: Altronate oxidoreductase (483 aa).

NAD(+) is bound at residue 18–29 (IIQFGEGNFLRA).

It belongs to the mannitol dehydrogenase family. UxaB subfamily.

It carries out the reaction D-altronate + NAD(+) = keto-D-tagaturonate + NADH + H(+). Its pathway is carbohydrate metabolism; pentose and glucuronate interconversion. The sequence is that of Altronate oxidoreductase from Escherichia coli O1:K1 / APEC.